Consider the following 725-residue polypeptide: Glyoxysomal fatty acid beta-oxidation multifunctional protein MFP-a (725 aa).

This sequence in the N-terminal section; belongs to the enoyl-CoA hydratase/isomerase family. In the central section; belongs to the 3-hydroxyacyl-CoA dehydrogenase family.

The protein resides in the glyoxysome. The enzyme catalyses a (3S)-3-hydroxyacyl-CoA = a (2E)-enoyl-CoA + H2O. The catalysed reaction is a 4-saturated-(3S)-3-hydroxyacyl-CoA = a (3E)-enoyl-CoA + H2O. It carries out the reaction a (3Z)-enoyl-CoA = a 4-saturated (2E)-enoyl-CoA. It catalyses the reaction a (3E)-enoyl-CoA = a 4-saturated (2E)-enoyl-CoA. The enzyme catalyses (3S)-3-hydroxybutanoyl-CoA = (3R)-3-hydroxybutanoyl-CoA. The catalysed reaction is a (3S)-3-hydroxyacyl-CoA + NAD(+) = a 3-oxoacyl-CoA + NADH + H(+). Its pathway is lipid metabolism; fatty acid beta-oxidation. This chain is Glyoxysomal fatty acid beta-oxidation multifunctional protein MFP-a, found in Cucumis sativus (Cucumber).